Reading from the N-terminus, the 203-residue chain is Chemotactic transduction protein ChpE (203 aa).

5 consecutive transmembrane segments (helical) span residues 3–23 (AIFLAALLFGFAFNVSPGAVF), 46–66 (LIGDAVWALLGLTGLALLLGY), 69–89 (VRIPLTLACAAYLAWLGVQGL), 123–143 (NVVYWGALGSALAGIVDGTPN), and 149–169 (VFFAGFMLSSLIWCFCCAALV).

This sequence belongs to the Rht family.

It localises to the cell membrane. The sequence is that of Chemotactic transduction protein ChpE (chpE) from Pseudomonas aeruginosa (strain ATCC 15692 / DSM 22644 / CIP 104116 / JCM 14847 / LMG 12228 / 1C / PRS 101 / PAO1).